The chain runs to 380 residues: Acid phosphatase-like protein XcAP-3 (380 aa).

Residues 1-19 form the signal peptide; that stretch reads MKATILLFLVLAVVQLSTA. 3 disulfide bridges follow: C147-C374, C167-C221, and C347-C351.

It belongs to the histidine acid phosphatase family.

It localises to the secreted. In terms of biological role, probably modulates blood feeding of fleas on vertebrate species by binding and sequestering different mediators involved in the host response. Binds histamine. Binds leukotriene C4. Does not bind serotonin, adrenaline, noradrenaline, leukotriene B4, leukotriene D4, leukotriene E4, ADP, and stable analogs of thromboxane A2: U-46619 and cTXA2. The chain is Acid phosphatase-like protein XcAP-3 from Xenopsylla cheopis (Oriental rat flea).